A 98-amino-acid polypeptide reads, in one-letter code: Cytochrome b (98 aa).

Helical transmembrane passes span 1–18 (LLGL…FLAM), 42–63 (WLIR…YLHV), and 78–98 (WNIG…GYVL). Heme b-binding residues include His48 and His62.

It belongs to the cytochrome b family. As to quaternary structure, the cytochrome bc1 complex contains 3 respiratory subunits (MT-CYB, CYC1 and UQCRFS1), 2 core proteins (UQCRC1 and UQCRC2) and probably 6 low-molecular weight proteins. Heme b serves as cofactor.

Its subcellular location is the mitochondrion inner membrane. Component of the ubiquinol-cytochrome c reductase complex (complex III or cytochrome b-c1 complex) that is part of the mitochondrial respiratory chain. The b-c1 complex mediates electron transfer from ubiquinol to cytochrome c. Contributes to the generation of a proton gradient across the mitochondrial membrane that is then used for ATP synthesis. The sequence is that of Cytochrome b (mt-cyb) from Scaphirhynchus platorynchus (Shovelnose sturgeon).